A 290-amino-acid polypeptide reads, in one-letter code: tRNA(Ile)-lysidine synthase (290 aa).

12-17 (SGGSDS) is an ATP binding site.

The protein belongs to the tRNA(Ile)-lysidine synthase family.

It localises to the cytoplasm. The enzyme catalyses cytidine(34) in tRNA(Ile2) + L-lysine + ATP = lysidine(34) in tRNA(Ile2) + AMP + diphosphate + H(+). Ligates lysine onto the cytidine present at position 34 of the AUA codon-specific tRNA(Ile) that contains the anticodon CAU, in an ATP-dependent manner. Cytidine is converted to lysidine, thus changing the amino acid specificity of the tRNA from methionine to isoleucine. The chain is tRNA(Ile)-lysidine synthase from Mycoplasma genitalium (strain ATCC 33530 / DSM 19775 / NCTC 10195 / G37) (Mycoplasmoides genitalium).